Reading from the N-terminus, the 417-residue chain is Dibenzothiophene monooxygenase (417 aa).

The helical N-terminus stretch occupies residues 18-124 (NDPVAVARGL…HLYTQIAQNN (107 aa)). FMN-binding positions include Y96, 129–134 (NASSEN), 159–163 (KHFCS), R282, 369–370 (AR), and H391. The interval 125–233 (WWTGNASSEN…KVEPDEVLGA (109 aa)) is central beta-barrel N-terminus. Residues 131 to 142 (SSENNSHVLDWK) form a lid loop region. Residues 234–417 (PNAFVLAFIQ…GQYPIPGFTS (184 aa)) are helical C-terminus.

This sequence belongs to the DszC flavin monooxygenase family. As to quaternary structure, homotetramer formed by a dimer of dimers; FMN binds between monomers of the homodimer.

The protein localises to the cytoplasm. It carries out the reaction dibenzothiophene + 2 FMNH2 + 2 O2 = dibenzothiophene 5,5-dioxide + 2 FMN + 2 H2O + 2 H(+). The enzyme catalyses dibenzothiophene + FMNH2 + O2 = dibenzothiophene 5-oxide + FMN + H2O + H(+). The catalysed reaction is dibenzothiophene 5-oxide + FMNH2 + O2 = dibenzothiophene 5,5-dioxide + FMN + H2O + H(+). It participates in sulfur metabolism; dibenzothiophene degradation. DBT degradation completely inhibited by Cu(2+), Mn(2+), p-chloromercuribenzoic acid, 2,2-bipyridyl, 1,10-phenanthroline, and strongly inhibited by Zn(2+), 5,5'- Dithiobis(2-nitrobenzoic acid) and 8-quinolinol. Catalyzes the first step of the '4S' desulfurization pathway that removes covalently bound sulfur from dibenzothiophene (DBT) without breaking carbon-carbon bonds. Sulfur dioxygenase which converts DBT to DBT-sulfone (DBTO2 or DBT 5,5-dioxide) in a stepwise manner. Also acts on thioxanthen-9-one and 4,6-dimethyl DBT and 2,8-dimethyl DBT. The polypeptide is Dibenzothiophene monooxygenase (Rhodococcus erythropolis (Arthrobacter picolinophilus)).